The following is a 293-amino-acid chain: uncharacterized protein (293 aa).

Residues 1–58 enclose the HTH lysR-type domain; that stretch reads MDLRRFITLKTVVEEGSFLRASQKLCCTQSTVTFHIQQLEQEFSVQLFEKIGRRMCLT. A DNA-binding region (H-T-H motif) is located at residues 18 to 37; the sequence is FLRASQKLCCTQSTVTFHIQ.

Belongs to the LysR transcriptional regulatory family.

This is an uncharacterized protein from Escherichia coli (strain K12).